The sequence spans 207 residues: LexA repressor (207 aa).

A DNA-binding region (H-T-H motif) is located at residues 28–48 (VREIGEAVGLASSSTVHGHLS). Catalysis depends on for autocatalytic cleavage activity residues Ser130 and Lys168.

It belongs to the peptidase S24 family. As to quaternary structure, homodimer.

The enzyme catalyses Hydrolysis of Ala-|-Gly bond in repressor LexA.. Its function is as follows. Represses a number of genes involved in the response to DNA damage (SOS response), including recA and lexA. In the presence of single-stranded DNA, RecA interacts with LexA causing an autocatalytic cleavage which disrupts the DNA-binding part of LexA, leading to derepression of the SOS regulon and eventually DNA repair. In Staphylococcus aureus (strain MSSA476), this protein is LexA repressor.